A 432-amino-acid chain; its full sequence is 5-hydroxybenzimidazole synthase BzaA (432 aa).

Residues methionine 95, tyrosine 124, histidine 163, 185–187, and 226–229 contribute to the substrate site; these read SYG and DGMR. Residue histidine 269 participates in Zn(2+) binding. Phenylalanine 292 lines the substrate pocket. Histidine 333 contacts Zn(2+). 3 residues coordinate [4Fe-4S] cluster: cysteine 409, cysteine 412, and cysteine 416.

Belongs to the ThiC family. 5-hydroxybenzimidazole synthase subfamily. It depends on [4Fe-4S] cluster as a cofactor.

It carries out the reaction 5-amino-1-(5-phospho-beta-D-ribosyl)imidazole + AH2 + S-adenosyl-L-methionine = 5-hydroxybenzimidazole + 5'-deoxyadenosine + formate + L-methionine + A + NH4(+) + phosphate + 2 H(+). Functionally, together with BzaB, probably catalyzes the conversion of aminoimidazole ribotide (AIR) to 5-hydroxybenzimidazole (5-HBI) in a radical S-adenosyl-L-methionine (SAM)-dependent reaction. Is thus involved in the anaerobic biosynthesis of the benzimidazole lower axial ligand of the cobamide produced by M.thermoacetica. Requires BzaB for catalytic activity, as BzaA alone displays no activity. The polypeptide is 5-hydroxybenzimidazole synthase BzaA (Moorella thermoacetica (strain ATCC 39073 / JCM 9320)).